Reading from the N-terminus, the 486-residue chain is Cysteine--tRNA ligase (486 aa).

Cys27 provides a ligand contact to Zn(2+). The 'HIGH' region signature appears at 29–39; that stretch reads PTTYNFIHLGN. The Zn(2+) site is built by Cys207, His232, and Glu236. A 'KMSKS' region motif is present at residues 264 to 268; sequence KMSKS. Lys267 is an ATP binding site.

It belongs to the class-I aminoacyl-tRNA synthetase family. In terms of assembly, monomer. Zn(2+) is required as a cofactor.

The protein localises to the cytoplasm. It catalyses the reaction tRNA(Cys) + L-cysteine + ATP = L-cysteinyl-tRNA(Cys) + AMP + diphosphate. The polypeptide is Cysteine--tRNA ligase (Desulforamulus reducens (strain ATCC BAA-1160 / DSM 100696 / MI-1) (Desulfotomaculum reducens)).